Reading from the N-terminus, the 741-residue chain is MLERKKPKTAENQKASEENEITQPGGSSAKPALPCLNFEAVLSPAPALIHSTHSLTNSHAHTGSSDCDISCKGMTERIHSINLHNFSNSVLETLNEQRNRGHFCDVTVRIHGSMLRAHRCVLAAGSPFFQDKLLLGYSDIEIPSVVSVQSVQKLIDFMYSGVLRVSQSEALQILTAASILQIKTVIDECTRIVSQNVGDVFPGIQDSGQDTPRGTPESGTSGQSSDTESGYLQSHPQHSVDRIYSALYACSMQNGSGERSFYSGAVVSHHETALGLPRDHHMEDPSWITRIHERSQQMERYLSTTPETTHCRKQPRPVRIQTLVGNIHIKQEMEDDYDYYGQQRVQILERNESEECTEDTDQAEGTESEPKGESFDSGVSSSIGTEPDSVEQQFGAAAPRDGQAEPAQPEQAAEAPAESSAQPNQLEPGASSPERSNESEMDNTVITVSNSSDKGVLQQPSVNTSIGQPLPSTQLYLRQTETLTSNLRMPLTLTSNTQVIGTAGNTYLPALFTTQPAGSGPKPFLFSLPQPLTGQQTQFVTVSQPGLSTFTAQLPAPQPLASSAGHSTASGQGDKKPYECTLCNKTFTAKQNYVKHMFVHTGEKPHQCSICWRSFSLKDYLIKHMVTHTGVRAYQCSICNKRFTQKSSLNVHMRLHRGEKSYECYICKKKFSHKTLLERHVALHSASNGTPPAGTPPGARAGPPGVVACTEGTTYVCSVCPAKFDQIEQFNDHMRMHVSDG.

The span at 1 to 17 (MLERKKPKTAENQKASE) shows a compositional bias: basic and acidic residues. Residues 1 to 28 (MLERKKPKTAENQKASEENEITQPGGSS) form a disordered region. One can recognise a BTB domain in the interval 104 to 167 (CDVTVRIHGS…MYSGVLRVSQ (64 aa)). The disordered stretch occupies residues 203-235 (GIQDSGQDTPRGTPESGTSGQSSDTESGYLQSH). Polar residues predominate over residues 206–235 (DSGQDTPRGTPESGTSGQSSDTESGYLQSH). T211 carries the post-translational modification Phosphothreonine. A Glycyl lysine isopeptide (Lys-Gly) (interchain with G-Cter in SUMO1); alternate cross-link involves residue K330. Residue K330 forms a Glycyl lysine isopeptide (Lys-Gly) (interchain with G-Cter in SUMO2); alternate linkage. The disordered stretch occupies residues 350 to 440 (RNESEECTED…SSPERSNESE (91 aa)). S353 carries the phosphoserine modification. Acidic residues predominate over residues 354–367 (EECTEDTDQAEGTE). T357 is subject to Phosphothreonine. Residue K371 forms a Glycyl lysine isopeptide (Lys-Gly) (interchain with G-Cter in SUMO2) linkage. Residues 404-423 (AEPAQPEQAAEAPAESSAQP) show a composition bias toward low complexity. 4 consecutive C2H2-type zinc fingers follow at residues 578–600 (YECTLCNKTFTAKQNYVKHMFVH), 606–628 (HQCSICWRSFSLKDYLIKHMVTH), 634–656 (YQCSICNKRFTQKSSLNVHMRLH), and 662–684 (YECYICKKKFSHKTLLERHVALH). Phosphothreonine occurs at positions 690 and 695. The C2H2-type 5 zinc-finger motif lies at 715-737 (YVCSVCPAKFDQIEQFNDHMRMH). K723 participates in a covalent cross-link: Glycyl lysine isopeptide (Lys-Gly) (interchain with G-Cter in SUMO2).

As to quaternary structure, can homodimerize. Binds to DNA. Sumoylated with SUMO1. As to expression, specifically expressed in early hippocampal neurons, cerebellar granule cells and gliogenic progenitors as well as in differentiated glia. Expressed in adult and aged myogenic satellite cells.

It is found in the nucleus. May be a transcription factor that may be involved in hematopoiesis, oncogenesis, and immune responses. Plays a role in postnatal myogenesis, may be involved in the regulation of satellite cells self-renewal. The chain is Zinc finger and BTB domain-containing protein 20 (Zbtb20) from Mus musculus (Mouse).